The following is a 275-amino-acid chain: MISPSTKLYGLIGYPLGHSISFYIHNAAFRALSIDALYINIPIEPESFSKAILGIKYLPIYGLNVTIPHKERIIDFLDEISVISKLIGAVNTVYLEENKWKGENTDFGGFLETLKELKLDKDLPCLILGAGGAARAVVYAVIEYGFKEIYLTNRTYGRAERIAEEVKKNKNIEIKIIPWQERHKVDEKLILINTTSIGLDGKSTPWNGNFKSIAFVYDIIYNPKETPLLSLAKENNVPFKNGLDMLIYQACLSWNKWFGFIGPFEIMKREAEKLL.

Shikimate is bound by residues 19–21 (SIS) and T66. K70 (proton acceptor) is an active-site residue. 2 residues coordinate shikimate: N91 and D106. NADP(+) contacts are provided by residues 129–133 (GAGGA), 153–158 (NRTYGR), and I219. Y221 is a shikimate binding site. Position 242 (G242) interacts with NADP(+).

Belongs to the shikimate dehydrogenase family. In terms of assembly, homodimer.

The enzyme catalyses shikimate + NADP(+) = 3-dehydroshikimate + NADPH + H(+). It functions in the pathway metabolic intermediate biosynthesis; chorismate biosynthesis; chorismate from D-erythrose 4-phosphate and phosphoenolpyruvate: step 4/7. Functionally, involved in the biosynthesis of the chorismate, which leads to the biosynthesis of aromatic amino acids. Catalyzes the reversible NADPH linked reduction of 3-dehydroshikimate (DHSA) to yield shikimate (SA). This is Shikimate dehydrogenase (NADP(+)) from Dictyoglomus thermophilum (strain ATCC 35947 / DSM 3960 / H-6-12).